The primary structure comprises 341 residues: MLFLAPGYIFPNVATPVTVAIDFAQAVKQGAYNVLDLKASPIPNPELFQPPSRIIRGPLNYLLSLPGKDIRGKLIDALNEWFRVPEDKLNIIKEIVVILHTASLLIDDIQDSSELRRGNPVAHRIFGVAQTINSANYAYFLAQAKLADLNDSRAFDIFTKGLLKLHRGQGMELYWRDNLICPTEEEYVEMVSCKTGGLFYLAVQLMQLNSEVTVNFSNFINLLGIIFQIRDDYMNLQSGTMTKTKGFSEDLTEGKFGYPIIHSIHAAPNDSQLIQILKLKTKDEVIKQYAVRYIESTGSFVYCREKLDMYLEEANETFRGLEMLLGPSKGIRAILDFLRTR.

Isopentenyl diphosphate-binding residues include Lys68, Arg71, and His100. Asp107 and Asp111 together coordinate Mg(2+). Arg116 is a dimethylallyl diphosphate binding site. Arg117 contacts isopentenyl diphosphate. Positions 194, 195, and 228 each coordinate dimethylallyl diphosphate. Residue Asp231 coordinates Mg(2+). 3 residues coordinate dimethylallyl diphosphate: Asn235, Lys245, and Lys255.

The protein belongs to the FPP/GGPP synthase family. The cofactor is Mg(2+).

It catalyses the reaction isopentenyl diphosphate + dimethylallyl diphosphate = (2E)-geranyl diphosphate + diphosphate. The catalysed reaction is isopentenyl diphosphate + (2E)-geranyl diphosphate = (2E,6E)-farnesyl diphosphate + diphosphate. It carries out the reaction isopentenyl diphosphate + (2E,6E)-farnesyl diphosphate = (2E,6E,10E)-geranylgeranyl diphosphate + diphosphate. The protein operates within secondary metabolite biosynthesis. In terms of biological role, geranylgeranyl pyrophosphate synthase; part of the gene cluster that mediates the biosynthesis of the indole diterpenes penitrems. The geranylgeranyl diphosphate (GGPP) synthase penG catalyzes the first step in penitrem biosynthesis via conversion of farnesyl pyrophosphate and isopentyl pyrophosphate into geranylgeranyl pyrophosphate (GGPP). Condensation of indole-3-glycerol phosphate with GGPP by the prenyl transferase penC then forms 3-geranylgeranylindole (3-GGI). Epoxidation by the FAD-dependent monooxygenase penM leads to a epoxidized-GGI that is substrate of the terpene cyclase penB for cyclization to yield paspaline. Paspaline is subsequently converted to 13-desoxypaxilline by the cytochrome P450 monooxygenase penP, the latter being then converted to paxilline by the cytochrome P450 monooxygenase penQ. Paxilline is converted to beta-paxitriol via C-10 ketoreduction by the short-chain dehydrogenase PC-15 which can be monoprenylated at the C-20 by the indole diterpene prenyltransferase penD. A two-step elimination (acetylation and elimination) process performed by the O-acetyltransferase PC-16 and the P.simplicissimum ptmI-ortholog not yet identified in P.crustosum, leads to the production of the prenylated form of penijanthine. The FAD-linked oxidoreductase ptmO then converts the prenylated form of penijanthine into PC-M5 which is in turn transformed into PC-M4 by the aromatic dimethylallyltransferase PC-22. A series of oxidation steps involving 4 cytochrome P450 monooxygenases (PC-21, PC-05, PC-23, PC-20) and a FAD-dependent monooxygenase (PC-14) are required for the transformation of PC-M4 to penitrems A and E. Synthesis of these final products is proposed to proceed via penitrems D and C (PC-21, PC-05, PC-14) and penitrems B and F (PC-21, PC-05, PC-14, PC-23). This Penicillium crustosum (Blue mold fungus) protein is Geranylgeranyl pyrophosphate synthase penG.